Consider the following 569-residue polypeptide: MGVVRVQHETKMENQSWLKKLARRLGPGHVVNLCFIVVLLFSTLLTWREVVVLEDAYISSQRNHLENVANALDKHLQYNVDKLIFLRNGMREALVAPLDFTSLRNAVTEFEQHRDEHAWQIELNRRRTLPVNGVSDALVSEGNFLSRENESLDNEITAALEVGYLLRLAHNSSSMVEQAMYVSRAGFYVSTQPTLFTRNVPTRYYGYVTQPWFIGHSQRENRHRAVRWFTSQPEHASNTEPQVTVSVPVDSNNYWYGVLGMSIPVRTMQQFLRNAIDKNLDGEYQLYDSKLRFLTSSNPDHPTGNIFDPRELALLAQAMEHDTRGGIRMDSRYVSWERLDHFDGVLARVHTLSEGVRGDFGSISIALTLLWALFTTMLLLSWYVIRRMVSNMYVLQSSLQWQAWHDTLTRLYNRGALFEKARPLAKLCQTHQHPFSVIQVDLDHFKAINDRFGHQAGDRVLSHAAGLISSSLRAQDVAGRVGGEEFCVILPGANLTQAAEVAERIRLKLNEKEMLIAKSTTIRISASLGVSSSEETGDYDFEQLQSLADRRLYLAKQAGRNRVFASDNA.

2 consecutive transmembrane segments (helical) span residues 25–45 (LGPGHVVNLCFIVVLLFSTLL) and 365–385 (IALTLLWALFTTMLLLSWYVI). The region spanning 433-568 (HPFSVIQVDL…GRNRVFASDN (136 aa)) is the GGDEF domain. Aspartate 441 lines the Mg(2+) pocket. Residues asparagine 449, histidine 454, and aspartate 458 each coordinate substrate. Glutamate 484 serves as a coordination point for Mg(2+). Glutamate 484 functions as the Proton acceptor in the catalytic mechanism.

As to quaternary structure, homodimer. Mg(2+) serves as cofactor.

The protein localises to the cell inner membrane. The catalysed reaction is 2 GTP = 3',3'-c-di-GMP + 2 diphosphate. It participates in glycan metabolism; bacterial cellulose biosynthesis. Its pathway is purine metabolism; 3',5'-cyclic di-GMP biosynthesis. Functionally, catalyzes the synthesis of cyclic-di-GMP (c-di-GMP) via the condensation of 2 GTP molecules. Cyclic-di-GMP is a second messenger which controls cell surface-associated traits in bacteria. Involved in the regulation of cellulose production. The protein is Putative diguanylate cyclase DgcQ of Shigella flexneri.